The following is a 714-amino-acid chain: P-loop NTPase domain-containing protein LPA1 (714 aa).

A compositionally biased stretch (low complexity) spans 1 to 11; that stretch reads MPMPPQCASSK. Disordered regions lie at residues 1–42, 259–293, and 595–689; these read MPMP…PPPK, QKLD…PRTE, and FGSE…GSGN. A compositionally biased stretch (basic and acidic residues) spans 271-285; that stretch reads EGRDDTSDDKAHHGS. The segment covering 595-617 has biased composition (acidic residues); the sequence is FGSEEDADDPPDAGTDEDLTDEE. A compositionally biased stretch (basic and acidic residues) spans 618 to 636; that stretch reads RDMHEIEAGSVDEHSTKSD. The segment covering 659–670 has biased composition (polar residues); the sequence is AASSTKNSSNQE.

In terms of tissue distribution, expressed in roots, leaf blade shoots, leaf sheath shoots and panicles.

In terms of biological role, required for the accumulation of phytic acid in seeds. Phytic acid is the primary storage form of phosphorus in cereal grains and other plant seeds. In Oryza sativa subsp. japonica (Rice), this protein is P-loop NTPase domain-containing protein LPA1.